A 364-amino-acid chain; its full sequence is Serine/threonine-protein kinase ENV7 (364 aa).

Residues Cys-13, Cys-14, and Cys-15 are each lipidated (S-palmitoyl cysteine). Residues 30–364 enclose the Protein kinase domain; it reads YRIQRLLGEG…LLNLLQDLDT (335 aa). Residues 36–44 and Lys-69 contribute to the ATP site; that span reads LGEGGMSFV. Asp-215 functions as the Proton acceptor in the catalytic mechanism.

Belongs to the protein kinase superfamily. Ser/Thr protein kinase family.

The protein resides in the vacuole membrane. The enzyme catalyses L-seryl-[protein] + ATP = O-phospho-L-seryl-[protein] + ADP + H(+). The catalysed reaction is L-threonyl-[protein] + ATP = O-phospho-L-threonyl-[protein] + ADP + H(+). Its function is as follows. Serine/threonine-protein kinase involved in vacuolar processing and morphology. This is Serine/threonine-protein kinase ENV7 (ENV7) from Saccharomyces cerevisiae (strain ATCC 204508 / S288c) (Baker's yeast).